The sequence spans 457 residues: MRTTGLLLLGALAELGSATYILEDDYQPNTWFDQFRFFSAKDPTHAYVNYLDQAEARSQNLIGVRNNAVYLGVDHKNVATGEGRSSVRLETKKVYNHGLIVADINHMPGGECGTWPAFWTTSSAWPMEGELDIIEGVNQQKQNDYALHTAQGCSIPERGDFTGSVVTPNCDVKALGQAENQGCLVEDTKGSRGYGPDFNNATGGVFATEWTDQAISIWFFPREDIPKDVNSEHPDPSKWGKPSAFFGGGECPIGKHVRNQRIIFNTAFCGGWADGMWPGDPICSKKAPTCMEYVRENPSAFEDAYWSINYMKVYQQGTAPTKPSQAPAPPSSTPALPTMKSTSTVSSMVSATQPAPTASNPTGAPMQPSSSSSNNGPQPTGGNGNPGDSCPPPTQPACRTYVTTKTYTLVSTMMPSGPQTTGGIVPVPSAALEDIKDTAQRLRRRDMERHSRRGHHN.

Positions Met1–Ala18 are cleaved as a signal peptide. Positions Thr19 to Ala319 constitute a GH16 domain. Residue Glu130 is the Nucleophile of the active site. Glu135 acts as the Proton donor in catalysis. N-linked (GlcNAc...) asparagine glycosylation occurs at Asn200. The disordered stretch occupies residues Thr318–Ala397. The segment covering Thr333–Thr352 has biased composition (low complexity). Positions Gln353–Thr362 are enriched in polar residues. Over residues Pro368–Gln378 the composition is skewed to low complexity.

This sequence belongs to the glycosyl hydrolase 16 family.

The protein localises to the secreted. The enzyme catalyses Endohydrolysis of (1-&gt;3)- or (1-&gt;4)-linkages in beta-D-glucans when the glucose residue whose reducing group is involved in the linkage to be hydrolyzed is itself substituted at C-3.. Its function is as follows. Mixed-linked glucanase involved in the degradation of complex natural cellulosic substrates. Active on laminarin. lichenan, soluble carboxymethyl cellulose but not on pustulan. The sequence is that of Endo-1,3(4)-beta-glucanase ARB_04519 from Arthroderma benhamiae (strain ATCC MYA-4681 / CBS 112371) (Trichophyton mentagrophytes).